Consider the following 594-residue polypeptide: Nucleolar protein 56 (594 aa).

Residues lysine 87, lysine 230, and lysine 240 each participate in a glycyl lysine isopeptide (Lys-Gly) (interchain with G-Cter in SUMO2) cross-link. The 119-residue stretch at 292 to 410 (VAPSLSALIG…VEERLSFYET (119 aa)) folds into the Nop domain. Serine 314 carries the post-translational modification Phosphoserine. At arginine 359 the chain carries Omega-N-methylarginine. Composition is skewed to low complexity over residues 458–469 (ALASSENSSSTP) and 488–504 (QEVPQENGMEDPSISFS). The disordered stretch occupies residues 458 to 594 (ALASSENSSS…KKFHKASQED (137 aa)). Phosphoserine is present on residues serine 466 and serine 467. Position 468 is a phosphothreonine (threonine 468). Residues serine 511, serine 519, serine 520, and serine 537 each carry the phosphoserine modification. A Glycyl lysine isopeptide (Lys-Gly) (interchain with G-Cter in SUMO2) cross-link involves residue lysine 540. Position 561 is an N6-acetyllysine (lysine 561). Position 563 is a phosphoserine (serine 563). Residue lysine 564 forms a Glycyl lysine isopeptide (Lys-Gly) (interchain with G-Cter in SUMO2) linkage. Residues serine 569, serine 570, serine 579, and serine 581 each carry the phosphoserine modification. The span at 580-594 (SSKKKKKFHKASQED) shows a compositional bias: basic residues.

Belongs to the NOP5/NOP56 family. Part of a large pre-ribosomal ribonucleoprotein (RNP) complex, that consists of at least 62 ribosomal proteins, 45 nonribosomal proteins and both pre-rRNA and mature rRNA species. Within this complex directly interacts with TCOF1 in an RNA-independent manner. Core component of box C/D small nucleolar ribonucleoprotein (snoRNP) particles; the core proteins SNU13, NOP56, NOP58 and FBL or FBLL1 assemble stepwise onto the snoRNA. Interacts with NOP1 and NOP58. Interacts with NUFIP1, RUVBL1 and RUVBL2; RUVBL1:RUVBL2 seem to bridge the association of NOP56 with NUFIP1. Part of the small subunit (SSU) processome, composed of more than 70 proteins and the RNA chaperone small nucleolar RNA (snoRNA) U3. Interacts with NOP2 and FBL.

The protein resides in the nucleus. The protein localises to the nucleolus. Its subcellular location is the cytoplasm. It localises to the nucleoplasm. Functionally, involved in the early to middle stages of 60S ribosomal subunit biogenesis. Required for the biogenesis of box C/D snoRNAs such U3, U8 and U14 snoRNAs. Part of the small subunit (SSU) processome, first precursor of the small eukaryotic ribosomal subunit. During the assembly of the SSU processome in the nucleolus, many ribosome biogenesis factors, an RNA chaperone and ribosomal proteins associate with the nascent pre-rRNA and work in concert to generate RNA folding, modifications, rearrangements and cleavage as well as targeted degradation of pre-ribosomal RNA by the RNA exosome. Core component of box C/D small nucleolar ribonucleoprotein (snoRNP) complexes that function in methylation of multiple sites on ribosomal RNAs (rRNAs) and messenger RNAs (mRNAs). The protein is Nucleolar protein 56 of Homo sapiens (Human).